The following is an 83-amino-acid chain: NAD(P)H-quinone oxidoreductase subunit L (83 aa).

A run of 2 helical transmembrane segments spans residues 18–38 and 53–73; these read ILAY…ALFF and LLVY…APFL.

The protein belongs to the complex I NdhL subunit family. NDH-1 can be composed of about 15 different subunits; different subcomplexes with different compositions have been identified which probably have different functions.

Its subcellular location is the cellular thylakoid membrane. The enzyme catalyses a plastoquinone + NADH + (n+1) H(+)(in) = a plastoquinol + NAD(+) + n H(+)(out). It carries out the reaction a plastoquinone + NADPH + (n+1) H(+)(in) = a plastoquinol + NADP(+) + n H(+)(out). Functionally, NDH-1 shuttles electrons from an unknown electron donor, via FMN and iron-sulfur (Fe-S) centers, to quinones in the respiratory and/or the photosynthetic chain. The immediate electron acceptor for the enzyme in this species is believed to be plastoquinone. Couples the redox reaction to proton translocation, and thus conserves the redox energy in a proton gradient. Cyanobacterial NDH-1 also plays a role in inorganic carbon-concentration. In Parasynechococcus marenigrum (strain WH8102), this protein is NAD(P)H-quinone oxidoreductase subunit L.